A 186-amino-acid polypeptide reads, in one-letter code: MSRLSIFPDETAANAPDGLVPQLESNDPAVIQASLSRRGIGFEQWPAEHGLPEGADQATILQAYADAIAWVQRDGGYFTVDAIRMTPNHPDREPLRRKFLEEHTHAEDEVRFFVEGCGLFVLHIGSEVLSVLCERGDLMRVPAGTRHWFDMGSQPRFCAVRWFNNPEGWVAQYTGSSISQRFPRLD.

Fe(2+) contacts are provided by His-103, His-105, Glu-109, and His-147. His-103, His-105, Glu-109, and His-147 together coordinate Ni(2+).

The protein belongs to the acireductone dioxygenase (ARD) family. As to quaternary structure, monomer. Fe(2+) is required as a cofactor. It depends on Ni(2+) as a cofactor.

The catalysed reaction is 1,2-dihydroxy-5-(methylsulfanyl)pent-1-en-3-one + O2 = 3-(methylsulfanyl)propanoate + CO + formate + 2 H(+). It catalyses the reaction 1,2-dihydroxy-5-(methylsulfanyl)pent-1-en-3-one + O2 = 4-methylsulfanyl-2-oxobutanoate + formate + 2 H(+). The protein operates within amino-acid biosynthesis; L-methionine biosynthesis via salvage pathway; L-methionine from S-methyl-5-thio-alpha-D-ribose 1-phosphate: step 5/6. Functionally, catalyzes 2 different reactions between oxygen and the acireductone 1,2-dihydroxy-3-keto-5-methylthiopentene (DHK-MTPene) depending upon the metal bound in the active site. Fe-containing acireductone dioxygenase (Fe-ARD) produces formate and 2-keto-4-methylthiobutyrate (KMTB), the alpha-ketoacid precursor of methionine in the methionine recycle pathway. Ni-containing acireductone dioxygenase (Ni-ARD) produces methylthiopropionate, carbon monoxide and formate, and does not lie on the methionine recycle pathway. The polypeptide is Acireductone dioxygenase (Synechococcus sp. (strain CC9605)).